A 181-amino-acid chain; its full sequence is Protein Syd (181 aa).

The protein belongs to the Syd family.

It localises to the cell inner membrane. Its function is as follows. Interacts with the SecY protein in vivo. May bind preferentially to an uncomplexed state of SecY, thus functioning either as a chelating agent for excess SecY in the cell or as a regulatory factor that negatively controls the translocase function. The protein is Protein Syd of Salmonella agona (strain SL483).